A 219-amino-acid chain; its full sequence is Octanoyltransferase (219 aa).

In terms of domain architecture, BPL/LPL catalytic spans 37–219 (EHSPDQLWIL…DFNDVQVILQ (183 aa)). Substrate-binding positions include 76 to 83 (RGGQVTWH), 143 to 145 (SLG), and 156 to 158 (GLA). Residue Cys-174 is the Acyl-thioester intermediate of the active site.

The protein belongs to the LipB family.

The protein localises to the cytoplasm. The catalysed reaction is octanoyl-[ACP] + L-lysyl-[protein] = N(6)-octanoyl-L-lysyl-[protein] + holo-[ACP] + H(+). Its pathway is protein modification; protein lipoylation via endogenous pathway; protein N(6)-(lipoyl)lysine from octanoyl-[acyl-carrier-protein]: step 1/2. In terms of biological role, catalyzes the transfer of endogenously produced octanoic acid from octanoyl-acyl-carrier-protein onto the lipoyl domains of lipoate-dependent enzymes. Lipoyl-ACP can also act as a substrate although octanoyl-ACP is likely to be the physiological substrate. The protein is Octanoyltransferase of Acinetobacter baylyi (strain ATCC 33305 / BD413 / ADP1).